Here is a 918-residue protein sequence, read N- to C-terminus: MATASPRSDTSDIHSGRLQLKVTVSSAKLKRKKNWFGTAIYTEVIVDGEVKKTAKSSSSSNPKWDEQLIVNVTPQTTLEFRVWSHHTLKADALLGKATVDLKQVLLTHNRKLEKVKEQLKLSLENKNGIVQTGELTVVLDGLVIEQEPVTNRSSSPPIEIQQNGDALHENGDPATRTTPRLPVEGTIGIDNHVSTNTVVPNSCCSHVVNGENTPSSPSQVAARPKNAPAPKPVTSAPTSDTVNGESSSVLADNTSTMGTLLPSEDTTSTSNCTSTTTQEPPVQEPPASSEHSECIPSASAEVGPEARSLIDPDSDSRNNSVFDKVRQPEGCVEPLRPQSGNTNTEALPSGWEQRKDPHGRTYYVDHNTRTTTWERPQPLPPGWERRVDDRGRVYYVDHNTRTTTWQRPTMESVRNFEQWQSQRNQLQGAMQQFNQRYLYSASMLAAENDPYGPLPPGWEKRVDSTDRVYFVNHNTKTTQWEDPRTQGLPNEEPLPEGWEIRYTREGVRYFVDHNTRTTTFKDPRNGKSSVTKGGPQIAYERSFRWKLAHFRYLCQSNALPSHVKINVSRQTLFEDSFQQIMALKPYDLRRRLYVIFRGEEGLDYGGLAREWFFLLSHEVLNPMYCLFEYAGKNNYCLQINPASTINPDHLSYFCFIGRFIAMALFHGKFIDTGFSLPFYKRMLSKKLTIKDLESIDTEFYNSLIWIRDNNIEECGLEMYFSVDMEILGKVTSHDLKLGGSNILVTEENKDEYIGLMTEWRFSRGVQEQTKAFLDGFNEVVPLQWLQYFDEKELEVMLCGMQEVDLADWQRNTVYRHYTRNSKQIIWFWQFVKETDNEVRMRLLQFVTGTCRLPLGGFAELMGSNGPQKFCIEKVGKDTWLPRSHTCFNRLDLPPYKSYEQLKEKLLFAIEETEGFGQE.

One can recognise a C2 domain in the interval M1–K116. Polar residues-rich tracts occupy residues T150–G164, N209–Q219, and S235–G258. Disordered stretches follow at residues T150–P182 and N209–R360. Residues T266–P281 show a composition bias toward low complexity. 4 consecutive WW domains span residues E345 to P378, Q377 to M410, G452 to T485, and E492 to N525. Positions E345–N525 are interaction with ERBB4. The required for interaction with and ubiquitination of AMOTL2. Required for interaction with YAP1 stretch occupies residues E345–K527. Residues K584–E918 form the HECT domain. The active-site Glycyl thioester intermediate is the C886.

In terms of assembly, interacts with the Crumbs complex components PALS1 and PATJ; interaction with the Crumbs complex is enhanced by WWP1's interaction with AMOTL2 and facilitates WWP1 localization to the plasma membrane. Interaction with the Crumbs complex promotes WWP1 monoubiquitination of AMOTL2, which activates the Hippo signaling pathway. Binds SCNN1A, SCNN1B, SCNN1G, WBP1, WBP2, DRPLA and adenovirus type 2 PIII. Interacts with TGIF. Binds KLF2 AND HIVEP3. Interacts with RNF11. Interacts with SPART. Interacts with NDFIP1 and NDFIP2; this interaction activates the E3 ubiquitin-protein ligase. Interacts with ERBB4 isoforms JM-B CYT-1 and JM-A CYT-1. Does not interact with ERB4 isoform JMA-A CYT-2. Interacts with SMAD1, SMAD2, SMAD3, SMAD5, SMAD6, SMAD7, TGFBR1 and TGFBR2. Associates with the TGFBR1:TGFBR2 receptor complex in presence of SMAD7. Interacts with SKIL isoform 1. Interacts with TP63 isoform 1 and isoform 2. Interacts (via WW domains) with ARRDC1, ARRDC2 and ARRDC3. Auto-ubiquitinated and ubiquitinated by RNF11.

It is found in the cytoplasm. Its subcellular location is the cell membrane. It localises to the nucleus. The protein localises to the cell junction. The catalysed reaction is S-ubiquitinyl-[E2 ubiquitin-conjugating enzyme]-L-cysteine + [acceptor protein]-L-lysine = [E2 ubiquitin-conjugating enzyme]-L-cysteine + N(6)-ubiquitinyl-[acceptor protein]-L-lysine.. Its pathway is protein modification; protein ubiquitination. Its activity is regulated as follows. Activated by NDFIP1- and NDFIP2-binding. In terms of biological role, E3 ubiquitin-protein ligase which accepts ubiquitin from an E2 ubiquitin-conjugating enzyme in the form of a thioester and then directly transfers the ubiquitin to targeted substrates. Ubiquitinates and promotes degradation of SMAD2 in response to TGF-beta signaling, which requires interaction with TGIF. Ubiquitinates ERBB4 isoforms JM-A CYT-1 and JM-B CYT-1, KLF2, KLF5 and TP63 and promotes their proteasomal degradation. Ubiquitinates RNF11 without targeting it for degradation. Ubiquitinates and promotes degradation of TGFBR1; the ubiquitination is enhanced by SMAD7. Ubiquitinates SMAD6 and SMAD7. Activates the Hippo signaling pathway in response to cell contact inhibition and recruitment to the Crumbs complex at the cell membrane. Monoubiquitinates AMOTL2 which facilitates its interaction with and activation of LATS2. LATS2 then phosphorylates YAP1, excluding it from the nucleus and therefore ultimately represses YAP1-driven transcription of target genes. This is NEDD4-like E3 ubiquitin-protein ligase WWP1 (Wwp1) from Mus musculus (Mouse).